Here is a 182-residue protein sequence, read N- to C-terminus: Isopentenyl-diphosphate Delta-isomerase (182 aa).

Mn(2+) contacts are provided by histidine 23 and histidine 30. The 135-residue stretch at 28 to 162 (PRHLAFSCHV…PWAFSPWLVE (135 aa)) folds into the Nudix hydrolase domain. The active site involves cysteine 65. Cysteine 65 is a binding site for Mg(2+). Histidine 67 contributes to the Mn(2+) binding site. Glutamate 85 provides a ligand contact to Mg(2+). Mn(2+)-binding residues include glutamate 112 and glutamate 114. The active site involves glutamate 114.

This sequence belongs to the IPP isomerase type 1 family. The cofactor is Mg(2+). Mn(2+) serves as cofactor.

The protein resides in the cytoplasm. The catalysed reaction is isopentenyl diphosphate = dimethylallyl diphosphate. Its pathway is isoprenoid biosynthesis; dimethylallyl diphosphate biosynthesis; dimethylallyl diphosphate from isopentenyl diphosphate: step 1/1. Its function is as follows. Catalyzes the 1,3-allylic rearrangement of the homoallylic substrate isopentenyl (IPP) to its highly electrophilic allylic isomer, dimethylallyl diphosphate (DMAPP). The chain is Isopentenyl-diphosphate Delta-isomerase from Brevibacterium linens.